Consider the following 420-residue polypeptide: Homeobox-containing protein 1 (420 aa).

An HNF-p1 domain is found at 18 to 49 (DEPRFTIEQIDLLQRLRRTGMTKHEILHALET). A disordered region spans residues 56-139 (EHSDKFGRRS…GKMSPTRYHA (84 aa)). Residue lysine 60 forms a Glycyl lysine isopeptide (Lys-Gly) (interchain with G-Cter in SUMO2) linkage. Composition is skewed to low complexity over residues 64–73 (RSSYGGSSYG) and 81–93 (ASSS…TQTQ). Over residues 94–132 (HSGMSPSPSNSYDTSPQPCTTNQNGRENNERLSTSNGKM) the composition is skewed to polar residues. Lysine 131 participates in a covalent cross-link: Glycyl lysine isopeptide (Lys-Gly) (interchain with G-Cter in SUMO2). The POU-specific atypical domain maps to 145-241 (RSYSFEASEE…PGATLSMRPA (97 aa)). Position 148 is a phosphoserine (serine 148). Lysine 161 participates in a covalent cross-link: Glycyl lysine isopeptide (Lys-Gly) (interchain with G-Cter in SUMO2). At serine 170 the chain carries Phosphoserine. Residues lysine 174, lysine 217, and lysine 310 each participate in a glycyl lysine isopeptide (Lys-Gly) (interchain with G-Cter in SUMO2) cross-link. The homeobox DNA-binding region spans 267-341 (RRGSRFTWRK…NRRKEIKRRA (75 aa)). The disordered stretch occupies residues 353-385 (IDVQSPGGHSNSDDVDGNDYSEQDDSTSHSDHQ). The span at 365-377 (DDVDGNDYSEQDD) shows a compositional bias: acidic residues. A Glycyl lysine isopeptide (Lys-Gly) (interchain with G-Cter in SUMO1); alternate cross-link involves residue lysine 413. Residue lysine 413 forms a Glycyl lysine isopeptide (Lys-Gly) (interchain with G-Cter in SUMO2); alternate linkage.

Associates with the telomerase holoenzyme complex. Interacts with DKC1, XRCC6 and COIL. In terms of tissue distribution, ubiquitous. Detected in pancreas, brain, spleen, placenta, prostate, thymus, liver, heart, bone marrow, skeletal muscle, stomach, uterus, testis, kidney, ovary, colon, lung, cardiac muscle and thyroid gland.

The protein resides in the nucleus. The protein localises to the cytoplasm. It localises to the chromosome. Its subcellular location is the telomere. It is found in the cajal body. The protein resides in the PML body. Binds directly to 5'-TTAGGG-3' repeats in telomeric DNA. Associates with the telomerase complex at sites of active telomere processing and positively regulates telomere elongation. Important for TERT binding to chromatin, indicating a role in recruitment of the telomerase complex to telomeres. Also plays a role in the alternative lengthening of telomeres (ALT) pathway in telomerase-negative cells where it promotes formation and/or maintenance of ALT-associated promyelocytic leukemia bodies (APBs). Enhances formation of telomere C-circles in ALT cells, suggesting a possible role in telomere recombination. Might also be involved in the DNA damage response at telomeres. This Homo sapiens (Human) protein is Homeobox-containing protein 1.